The primary structure comprises 146 residues: Anti-sigma F factor (146 aa).

It belongs to the anti-sigma-factor family.

The enzyme catalyses L-seryl-[protein] + ATP = O-phospho-L-seryl-[protein] + ADP + H(+). It carries out the reaction L-threonyl-[protein] + ATP = O-phospho-L-threonyl-[protein] + ADP + H(+). Its function is as follows. Binds to sigma F and blocks its ability to form an RNA polymerase holoenzyme (E-sigma F). Phosphorylates SpoIIAA on a serine residue. This phosphorylation may enable SpoIIAA to act as an anti-anti-sigma factor that counteracts SpoIIAB and thus releases sigma F from inhibition. The protein is Anti-sigma F factor of Bacillus cytotoxicus (strain DSM 22905 / CIP 110041 / 391-98 / NVH 391-98).